Here is a 263-residue protein sequence, read N- to C-terminus: Lens fiber major intrinsic protein (263 aa).

The Cytoplasmic segment spans residues 1–9 (MWELRSASF). A helical membrane pass occupies residues 10 to 29 (WRAIFAEFFATLFYVFFGLG). The Extracellular portion of the chain corresponds to 30–41 (ASLRWAPGPLHV). Residues 42 to 59 (LQVALAFGLALATLVQTV) form a helical membrane-spanning segment. Over 60-61 (GH) the chain is Cytoplasmic. The discontinuously helical intramembrane region spans 62–77 (ISGAHVNPAVTFAFLV). The NPA 1 signature appears at 68–70 (NPA). Over 78–82 (GSQMS) the chain is Cytoplasmic. A helical transmembrane segment spans residues 83–106 (LLRAFCYIAAQLLGAVAGAAVLYS). Residues 107–127 (VTPPAVRGNLALNTLHAGVSV) lie on the Extracellular side of the membrane. The chain crosses the membrane as a helical span at residues 128–148 (GQATTVEIFLTLQFVLCIFAT). Residues 149–156 (YDERRNGR) are Cytoplasmic-facing. The helical transmembrane segment at 157–175 (MGSVALAVGFSLTLGHLFG) threads the bilayer. Residues 176–178 (MYY) lie on the Extracellular side of the membrane. The discontinuously helical intramembrane region spans 179-193 (TGAGMNPARSFAPAI). An NPA 2 motif is present at residues 184-186 (NPA). The Extracellular segment spans residues 194–200 (LTRNFSN). The helical transmembrane segment at 201–222 (HWVYWVGPIIGGGLGSLLYDFL) threads the bilayer. Over 223 to 263 (LFPRLKSVSERLSILKGARPSDSNGQPEGTGEPVELKTQAL) the chain is Cytoplasmic. Positions 227–237 (LKSVSERLSIL) are interaction with CALM. Phosphoserine is present on residues Ser235, Ser243, and Ser245. Residues 240–263 (ARPSDSNGQPEGTGEPVELKTQAL) form a disordered region. Deamidated asparagine is present on Asn246.

Belongs to the MIP/aquaporin (TC 1.A.8) family. Homotetramer; each monomer provides an independent water pore. Two homotetramers on opposing membranes can dimerize, forming a cell-cell junction. Interacts with CALM; the calcium-calmodulin/CALM complex interacts with the cytoplasmic domains of two aquaporins, leading to channel closure. Interacts with BFSP1 (via C-terminus); prevents calcium-dependent inhibition of the water channel activity. Post-translationally, subject to partial proteolytic cleavage in the eye lens core. Partial proteolysis promotes interactions between tetramers from adjoining membranes. In terms of processing, fatty acylated at Met-1 and Lys-238. The acyl modifications, in decreasing order of ion abundance, are: oleoyl (C18:1) &gt; palmitoyl (C16:0) &gt; stearoyl (C18:0) &gt; eicosenoyl (C20:1) &gt; dihomo-gamma-linolenoyl (C20:3) &gt; palmitoleoyl (C16:1) &gt; eicosadienoyl (C20:2).

It is found in the cell membrane. It localises to the cell junction. It carries out the reaction H2O(in) = H2O(out). Its activity is regulated as follows. The water channel activity is inhibited by calcium through calmodulin/CALM. Aquaporins form homotetrameric transmembrane channels, with each monomer independently mediating water transport across the plasma membrane along its osmotic gradient. Specifically expressed in lens fiber cells, this aquaporin is crucial for maintaining lens water homeostasis and transparency. Beyond water permeability, it also acts as a cell-to-cell adhesion molecule, forming thin junctions between lens fiber cells that are essential for maintaining the ordered structure and transparency of the lens. This is Lens fiber major intrinsic protein from Mus musculus (Mouse).